The following is a 102-amino-acid chain: Large ribosomal subunit protein uL24 (102 aa).

It belongs to the universal ribosomal protein uL24 family. In terms of assembly, part of the 50S ribosomal subunit.

In terms of biological role, one of two assembly initiator proteins, it binds directly to the 5'-end of the 23S rRNA, where it nucleates assembly of the 50S subunit. Its function is as follows. One of the proteins that surrounds the polypeptide exit tunnel on the outside of the subunit. This chain is Large ribosomal subunit protein uL24, found in Cupriavidus pinatubonensis (strain JMP 134 / LMG 1197) (Cupriavidus necator (strain JMP 134)).